Reading from the N-terminus, the 2833-residue chain is Reticulocyte-binding protein 1 (2833 aa).

Residues 1 to 22 form the signal peptide; that stretch reads MKRGICLAALLCLFNYLGAGHG. The segment covering 75–91 has biased composition (basic and acidic residues); the sequence is ETDNASGKDAEGSRPSH. Disordered regions lie at residues 75-95, 112-133, and 819-860; these read ETDN…DSSF, HVKE…KENE, and KHKQ…NFSR. Positions 819 to 836 are enriched in basic and acidic residues; sequence KHKQNRSEKEEEYFKNES. Residues 837-849 show a composition bias toward acidic residues; the sequence is VEEDLSREETEEQ. A Cell attachment site motif is present at residues 2563-2565; it reads RGD. The disordered stretch occupies residues 2619-2755; it reads EMNSKKSAIE…GTYQDTSNSS (137 aa). 2 stretches are compositionally biased toward basic and acidic residues: residues 2621-2633 and 2640-2652; these read NSKK…EKTA and ENNR…RARV. Residues 2655-2670 are compositionally biased toward polar residues; it reads MSMNNDPTQSETTHSE. Over residues 2706–2720 the composition is skewed to acidic residues; the sequence is LEEEETTAPMEETEM. The segment covering 2731 to 2742 has biased composition (basic and acidic residues); it reads TRSDEPDMHTEN. Residues 2743–2755 are compositionally biased toward polar residues; the sequence is TQDGTYQDTSNSS.

In terms of assembly, homodimer.

It is found in the membrane. Functionally, involved in reticulocyte adhesion. Specifically binds to human reticulocyte cells. In Plasmodium vivax (strain Belem), this protein is Reticulocyte-binding protein 1 (RBP1).